We begin with the raw amino-acid sequence, 146 residues long: Large ribosomal subunit protein uL11 (146 aa).

It belongs to the universal ribosomal protein uL11 family. Part of the ribosomal stalk of the 50S ribosomal subunit. Interacts with L10 and the large rRNA to form the base of the stalk. L10 forms an elongated spine to which L12 dimers bind in a sequential fashion forming a multimeric L10(L12)X complex. In terms of processing, one or more lysine residues are methylated.

Forms part of the ribosomal stalk which helps the ribosome interact with GTP-bound translation factors. The polypeptide is Large ribosomal subunit protein uL11 (Wolbachia pipientis wMel).